The chain runs to 85 residues: Large ribosomal subunit protein bL27 (85 aa).

The disordered stretch occupies residues M1–H25.

Belongs to the bacterial ribosomal protein bL27 family.

The polypeptide is Large ribosomal subunit protein bL27 (Buchnera aphidicola subsp. Baizongia pistaciae (strain Bp)).